The chain runs to 101 residues: Small ribosomal subunit protein uS14 (101 aa).

The protein belongs to the universal ribosomal protein uS14 family. As to quaternary structure, part of the 30S ribosomal subunit. Contacts proteins S3 and S10.

Functionally, binds 16S rRNA, required for the assembly of 30S particles and may also be responsible for determining the conformation of the 16S rRNA at the A site. The protein is Small ribosomal subunit protein uS14 of Methylococcus capsulatus (strain ATCC 33009 / NCIMB 11132 / Bath).